The chain runs to 879 residues: MQNTSCTEDRIQHALERCLHGLSGSTDISSNWTAGLCLNYWSLEELVNRDATNYIILAEKTLARTREAQKNGEYELLTPLALMFYFAVLRAPYIPETSDLLPKAFEVFHTFLTWPAPYCHVYQEMLSFISEEQKAPGITYQRLVRTEQGIPTRSSCSSTATVLLVNPAELPSEFLSVAEQLSNAEQPIQQTLVSLIQHLFQASLGTHAHTEELGASLKSRPIEKLQEIYSDLTEAMEHATMADIKPGKKRESLKAKLLEVAEKAGLMQGNTGSSLTSRIQPIFMPVAKCYTYSWDQDDFDILNQILLSESHLESLEDDVTEEDEEVDFEEVDDKDEDGGKSPKQDSVFSNSYVYWNFPSDSKEDPSMSMSNLASHSMTFVSSLSSCVDSGYVEDSDEGSQEISEIGEYQEERANNKLKQKICQLFKTKGHQAKDKLKAELSPCISHPLLSPFPDISKTIPLRRAGSMYTPQLSRIPVRSKRSKSLPQPAFGTQFLDLQLSQKVAFKRRPFLSCDDDTKVSTLRIVVFGSDRISGKVARAYSNLRLKESSCPLLTRFFKLQFYYIPVKRSSSSTNAPMTNAESPLKSPSPSGRFPLQDVFGDEASTNDISHYIGILDPWYKRNIMGLMDLSTSMLCQSSKEENETTETTTMPILADMVLYYCRFATRSLLLQLYRAEITFDSGGKQTEVFIQCLELGHSADLRAIRASGPGCKRLGIDGDQDVIPFTLQIVYSKSTVSGRSRWSNGEKVCTSVSLRKACNTYEELDSKMECLNLTVREVVKRQNSKTKKSFNQICTSHIKIDKAQIIAQHGGTFPLCLDQDERKILQRVIKCEVSPCYKPEDRDFCRRNRRPSWSQASQNQSEFCSLLCLPIATFCGAQP.

Residues 23–100 (SGSTDISSNW…APYIPETSDL (78 aa)) form a heterodimerization region. 2 disordered regions span residues 314 to 345 (SLED…PKQD) and 570 to 590 (SSST…PSPS). The segment covering 315–336 (LEDDVTEEDEEVDFEEVDDKDE) has biased composition (acidic residues). The span at 570–589 (SSSTNAPMTNAESPLKSPSP) shows a compositional bias: polar residues. The interval 651-751 (PILADMVLYY…WSNGEKVCTS (101 aa)) is interaction with beta-gamma G protein dimers.

As to quaternary structure, heterodimer. Interacts with a catalytic subunit and with beta-gamma G protein dimers.

The protein resides in the nucleus. It localises to the cytoplasm. Its subcellular location is the cell membrane. Its activity is regulated as follows. Greatly activated by G gamma proteins. Its function is as follows. Regulatory subunit of the PI3K gamma complex. Required for recruitment of the catalytic subunit to the plasma membrane via interaction with beta-gamma G protein dimers. Required for G protein-mediated activation of PIK3CG. This is Phosphoinositide 3-kinase regulatory subunit 5 (pik3r5) from Xenopus laevis (African clawed frog).